Here is a 331-residue protein sequence, read N- to C-terminus: MEDEAHEFFHTSDFAVDDLLVDFSNDDDEENDVVADSTTTTTITDSSNFSAADLPSFHGDVQDGTSFSGDLCIPSDDLADELEWLSNIVDESLSPEDVHKLELISGFKSRPDPKSDTGSPENPNSSSPIFTTDVSVPAKARSKRSRAAACNWASRGLLKETFYDSPFTGETILSSQQHLSPPTSPPLLMAPLGKKQAVDGGHRRKKDVSSPESGGAEERRCLHCATDKTPQWRTGPMGPKTLCNACGVRYKSGRLVPEYRPAASPTFVLAKHSNSHRKVMELRRQKEMSRAHHEFIHHHHGTDTAMIFDVSSDGDDYLIHHNVGPDFRQLI.

Disordered regions lie at residues 30 to 49 (ENDVVADSTTTTTITDSSNF) and 105 to 138 (SGFKSRPDPKSDTGSPENPNSSSPIFTTDVSVPA). Residues 34 to 47 (VADSTTTTTITDSS) show a composition bias toward low complexity. Polar residues predominate over residues 116–134 (DTGSPENPNSSSPIFTTDV). The short motif at 139-146 (KARSKRSR) is the Nuclear localization signal element. The segment at 174 to 218 (SSQQHLSPPTSPPLLMAPLGKKQAVDGGHRRKKDVSSPESGGAEE) is disordered. The GATA-type zinc-finger motif lies at 215-269 (GAEERRCLHCATDKTPQWRTGPMGPKTLCNACGVRYKSGRLVPEYRPAASPTFVL).

It belongs to the type IV zinc-finger family. Class A subfamily. Expressed in the vascular cylinder of roots. Expressed in the differentiation zone of the root stele.

It localises to the nucleus. Its function is as follows. Transcriptional activator that specifically binds 5'-GATA-3' or 5'-GAT-3' motifs within gene promoters. May be involved in the regulation of some light-responsive genes. Transcription activator involved in xylem formation. Functions upstream of NAC030/VND7, a master switch of xylem vessel differentiation. This is GATA transcription factor 12 from Arabidopsis thaliana (Mouse-ear cress).